The following is a 798-amino-acid chain: MWTSGRMSNAKNLFGLGVSLYFWGLMDLTTTVLSGSARPLTEGPEDNLSDKLHQRMKRSWVWNQFFVLEEYTGTDPLYVGKLHSDMDRGDGSIKYILSGEGAGIVFTIDDTTGDIHAIQRLDREERSQYTLRAQALDRRTGRPMEPESEFIIKIQDINDNEPKFLDGPYVASVPEMSPVGTSVIQVTATDADDPTYGNSARVVYSILQGQPYFSVDSRTGLIRTALMNMDREAKEYYEVIVQAKDMGGQLGGLAGTTTVNITLSDVNDNPPRFPQKHYQMSVLESAPVSSTVGRVVAKDLDEGINAEMKYSLVDGDGLDVFDINTDPNYQVGIITVRKPLSFESKKSYTLKVEGANPHLEMRFLNLGPFRDTTTVHISVEDVDEPPVFEPSFYFVEVPEDVEIGATIQIISAKDPDVTNNSIRYSIDRSSDPGRFFYVDITSGALMTARPLDREDVSWHNITVLAMELNNPSQVGSVSVTVKVLDVNDNAPEFARFYEAFVCENAKAGQLIQTVSAIDRDDPQEGQHFYYSLAPEAANNPNFTLRDNQDNTAWILTRRSGFRQHEQNIFYLPILISDNGRPVLSSTGTLTVHVCSCDEGGMVMSCNAEAYVLPVSLSRGALIAILACIFVLLVLVLLILSMRRQRKQPYIIDEEENIHENIVRYDDEGGGEEDTEAFDIAAMWNPREAQLVVKNRQDMLPEIESLSRYVPQACIMDNNVHNYVLAKLYEADMDLWAPPFDSLQTYMFEGNGSVAESLSSLQSVTTDSDQSYDYLTDWGPRFKKLAEMYGATDSSGALW.

The first 35 residues, methionine 1 to glycine 35, serve as a signal peptide directing secretion. A propeptide spanning residues serine 36 to arginine 58 is cleaved from the precursor. An N-linked (GlcNAc...) asparagine glycan is attached at asparagine 47. Topologically, residues serine 59–arginine 618 are extracellular. Cadherin domains lie at tryptophan 60–phenylalanine 164, leucine 165–phenylalanine 273, proline 274–phenylalanine 392, glutamate 389–phenylalanine 493, and phenylalanine 493–serine 615. The short motif at arginine 88–aspartate 90 is the Cell attachment site element. N-linked (GlcNAc...) asparagine glycosylation occurs at asparagine 260. 3 N-linked (GlcNAc...) asparagine glycosylation sites follow: asparagine 419, asparagine 460, and asparagine 541. A helical transmembrane segment spans residues glycine 619 to leucine 639. Residues serine 640–tryptophan 798 lie on the Cytoplasmic side of the membrane.

Detected in embryonic spinal cord, in the brachial and lumbar section of motor neurons (at protein level). Detected in ventro-lateral portion of embryonic spinal cord, in the brachial and lumbar section of embryonic motor neurons. Detected in embryonic adductor motor neurons and embryonic dorsal root ganglion. Detected in the caudal half of newly generated somites and in presomitic mesoderm.

Its subcellular location is the cell membrane. Its function is as follows. Cadherins are calcium-dependent cell adhesion proteins. They preferentially interact with themselves in a homophilic manner in connecting cells; cadherins may thus contribute to the sorting of heterogeneous cell types. This chain is Cadherin-20 (CDH20), found in Gallus gallus (Chicken).